We begin with the raw amino-acid sequence, 1177 residues long: Lon protease homolog, mitochondrial (1177 aa).

Disordered stretches follow at residues 72 to 197 (RTNS…KSPA) and 353 to 386 (AKKA…DSST). A compositionally biased stretch (basic and acidic residues) spans 103–150 (RGRELWVQEKDKSDKPEKSDKPDKTDKTDKDKPEKQDKDKTDKPEKTK). Low complexity predominate over residues 154-182 (TPSSTASTGAGEAAAPPSAPPSGSGSSSS). The region spanning 203-505 (ILAVPISDRP…RALILLKREH (303 aa)) is the Lon N-terminal domain. The segment covering 353 to 383 (AKKAKSGKTEDSKHDSKVTSKDGKETTEKYD) has biased composition (basic and acidic residues). ATP is bound at residue 657 to 664 (GPPGVGKT). Residues 883-916 (EKDKESAEKKTTKSKSKEVNEEPAAKEEKDKATE) are compositionally biased toward basic and acidic residues. The disordered stretch occupies residues 883 to 932 (EKDKESAEKKTTKSKSKEVNEEPAAKEEKDKATESAESSETKVGTKAPPV). The Lon proteolytic domain occupies 964 to 1150 (DPPPGVVMGL…QDVYDVVFQG (187 aa)). Catalysis depends on residues Ser1056 and Lys1099.

Belongs to the peptidase S16 family. In terms of assembly, homohexamer or homoheptamer. Organized in a ring with a central cavity.

Its subcellular location is the mitochondrion matrix. It catalyses the reaction Hydrolysis of proteins in presence of ATP.. Functionally, ATP-dependent serine protease that mediates the selective degradation of misfolded, unassembled or oxidatively damaged polypeptides as well as certain short-lived regulatory proteins in the mitochondrial matrix. May also have a chaperone function in the assembly of inner membrane protein complexes. Participates in the regulation of mitochondrial gene expression and in the maintenance of the integrity of the mitochondrial genome. Binds to mitochondrial DNA in a site-specific manner. This chain is Lon protease homolog, mitochondrial, found in Yarrowia lipolytica (strain CLIB 122 / E 150) (Yeast).